Consider the following 402-residue polypeptide: Protein kinase US3 homolog (402 aa).

Disordered regions lie at residues 1 to 21 and 46 to 88; these read MSSS…KVHD and FPDS…SPET. Positions 102 to 386 constitute a Protein kinase domain; it reads YNIVSSLSPG…AQDILMLPLF (285 aa). Residues 108–116 and Lys129 contribute to the ATP site; that span reads LSPGSEGYI. The active-site Proton acceptor is Asp218.

The protein belongs to the protein kinase superfamily. Ser/Thr protein kinase family. Phosphorylated by UL13 homolog; this phosphorylation regulates subsequent phosphorylation of UL31 and UL34 homologs by US3. Autophosphorylated.

The protein resides in the host cytoplasm. It is found in the host nucleus. The enzyme catalyses L-seryl-[protein] + ATP = O-phospho-L-seryl-[protein] + ADP + H(+). It carries out the reaction L-threonyl-[protein] + ATP = O-phospho-L-threonyl-[protein] + ADP + H(+). Multifunctional serine/threonine kinase that plays a role in several processes including egress of virus particles from the nucleus, modulation of the actin cytoskeleton and inhibition of apoptosis. Phosphorylates UL31 and UL34 homologs, two critical regulators of capsid budding from nucleus to endoplasmic reticulum, thereby facilitating virion egress. Modulates and redistributes host components of the nuclear envelope, including LMNA, emerin/EMD and the nuclear matrix protein MATR3. Phosphorylates envelope glycoprotein B (gB), probably to direct it to the cell surface. Promotes virus intracellular spread by restructuring host cell cytoskeleton. Blocks host apoptosis to extend cell survival and allow efficient viral replication. Promotes viral gene expression by phosphorylating host HDAC2 to reduce viral genome silencing. The polypeptide is Protein kinase US3 homolog (MDV092) (Gallus gallus (Chicken)).